Here is a 331-residue protein sequence, read N- to C-terminus: MAQLFYDSDADLGLLNSKTVAIIGYGSQGHAHALNLKDSGVNVVVGLYDGSRSADKAKADGLEVLSVADASAKADWVMVLLPDEFQKDVYEKEIAPHLTSGKVLSFAHGFNIRFELIKPPTDVDVVMIAPKGPGHTVRWEYQNGQGVPALFAIEQDASGQARGLAMAYAKGIGGTRAGILETNFKEETETDLFGEQAVLCGGLSELVKAGFETLVEAGYQPELAYFECLHEVKLIVDLMVKGGLTSMRDSISNTAEYGDYVSGPRLITADTKAEMKRVLADIQDGTFAKNFVAECEAGKPEMKKVRDRDSQHPIEKVGKGLRSMFSWLKDA.

The KARI N-terminal Rossmann domain occupies 2–182 (AQLFYDSDAD…GGTRAGILET (181 aa)). Residues 25-28 (YGSQ), serine 51, serine 53, and 83-86 (DEFQ) contribute to the NADP(+) site. Histidine 108 is an active-site residue. Residue glycine 134 coordinates NADP(+). In terms of domain architecture, KARI C-terminal knotted spans 183 to 328 (NFKEETETDL…KGLRSMFSWL (146 aa)). Aspartate 191, glutamate 195, glutamate 227, and glutamate 231 together coordinate Mg(2+). Residue serine 252 coordinates substrate.

The protein belongs to the ketol-acid reductoisomerase family. Mg(2+) is required as a cofactor.

The catalysed reaction is (2R)-2,3-dihydroxy-3-methylbutanoate + NADP(+) = (2S)-2-acetolactate + NADPH + H(+). The enzyme catalyses (2R,3R)-2,3-dihydroxy-3-methylpentanoate + NADP(+) = (S)-2-ethyl-2-hydroxy-3-oxobutanoate + NADPH + H(+). Its pathway is amino-acid biosynthesis; L-isoleucine biosynthesis; L-isoleucine from 2-oxobutanoate: step 2/4. It functions in the pathway amino-acid biosynthesis; L-valine biosynthesis; L-valine from pyruvate: step 2/4. Its function is as follows. Involved in the biosynthesis of branched-chain amino acids (BCAA). Catalyzes an alkyl-migration followed by a ketol-acid reduction of (S)-2-acetolactate (S2AL) to yield (R)-2,3-dihydroxy-isovalerate. In the isomerase reaction, S2AL is rearranged via a Mg-dependent methyl migration to produce 3-hydroxy-3-methyl-2-ketobutyrate (HMKB). In the reductase reaction, this 2-ketoacid undergoes a metal-dependent reduction by NADPH to yield (R)-2,3-dihydroxy-isovalerate. In Parasynechococcus marenigrum (strain WH8102), this protein is Ketol-acid reductoisomerase (NADP(+)).